The sequence spans 132 residues: Small ribosomal subunit protein uS8 (132 aa).

Belongs to the universal ribosomal protein uS8 family. In terms of assembly, part of the 30S ribosomal subunit. Contacts proteins S5 and S12.

Its function is as follows. One of the primary rRNA binding proteins, it binds directly to 16S rRNA central domain where it helps coordinate assembly of the platform of the 30S subunit. In Rickettsia rickettsii (strain Sheila Smith), this protein is Small ribosomal subunit protein uS8.